We begin with the raw amino-acid sequence, 732 residues long: 1,4-alpha-glucan branching enzyme GlgB 1 (732 aa).

Asp-411 acts as the Nucleophile in catalysis. Catalysis depends on Glu-464, which acts as the Proton donor.

This sequence belongs to the glycosyl hydrolase 13 family. GlgB subfamily. In terms of assembly, monomer.

The enzyme catalyses Transfers a segment of a (1-&gt;4)-alpha-D-glucan chain to a primary hydroxy group in a similar glucan chain.. Its pathway is glycan biosynthesis; glycogen biosynthesis. Catalyzes the formation of the alpha-1,6-glucosidic linkages in glycogen by scission of a 1,4-alpha-linked oligosaccharide from growing alpha-1,4-glucan chains and the subsequent attachment of the oligosaccharide to the alpha-1,6 position. This chain is 1,4-alpha-glucan branching enzyme GlgB 1, found in Xanthomonas euvesicatoria pv. vesicatoria (strain 85-10) (Xanthomonas campestris pv. vesicatoria).